Consider the following 215-residue polypeptide: N-(5'-phosphoribosyl)anthranilate isomerase (215 aa).

It belongs to the TrpF family.

It carries out the reaction N-(5-phospho-beta-D-ribosyl)anthranilate = 1-(2-carboxyphenylamino)-1-deoxy-D-ribulose 5-phosphate. The protein operates within amino-acid biosynthesis; L-tryptophan biosynthesis; L-tryptophan from chorismate: step 3/5. The protein is N-(5'-phosphoribosyl)anthranilate isomerase of Paracoccus denitrificans (strain Pd 1222).